The following is a 137-amino-acid chain: MSVKIRLKRMGAKKRPFYRVVIADSRSPRDGRFIETVGTYNPIAQPAEIKLDEAKILTWLSNGAQPSDTARNLLSNAGILAKFAEVKAAKKSTAAKPAASATKPTEKNTVAEIKAYLDAQGTQYASSAKKADLLALV.

This sequence belongs to the bacterial ribosomal protein bS16 family.

The sequence is that of Small ribosomal subunit protein bS16 from Leuconostoc citreum (strain KM20).